Here is a 743-residue protein sequence, read N- to C-terminus: 1,4-alpha-glucan branching enzyme GlgB (743 aa).

Asp416 acts as the Nucleophile in catalysis. Glu469 acts as the Proton donor in catalysis.

It belongs to the glycosyl hydrolase 13 family. GlgB subfamily. In terms of assembly, monomer.

It carries out the reaction Transfers a segment of a (1-&gt;4)-alpha-D-glucan chain to a primary hydroxy group in a similar glucan chain.. It functions in the pathway glycan biosynthesis; glycogen biosynthesis. In terms of biological role, catalyzes the formation of the alpha-1,6-glucosidic linkages in glycogen by scission of a 1,4-alpha-linked oligosaccharide from growing alpha-1,4-glucan chains and the subsequent attachment of the oligosaccharide to the alpha-1,6 position. This chain is 1,4-alpha-glucan branching enzyme GlgB, found in Shewanella baltica (strain OS195).